Reading from the N-terminus, the 327-residue chain is Phenylalanine--tRNA ligase alpha subunit (327 aa).

Residue E252 coordinates Mg(2+).

This sequence belongs to the class-II aminoacyl-tRNA synthetase family. Phe-tRNA synthetase alpha subunit type 1 subfamily. In terms of assembly, tetramer of two alpha and two beta subunits. Mg(2+) serves as cofactor.

The protein localises to the cytoplasm. It carries out the reaction tRNA(Phe) + L-phenylalanine + ATP = L-phenylalanyl-tRNA(Phe) + AMP + diphosphate + H(+). The chain is Phenylalanine--tRNA ligase alpha subunit from Yersinia pestis bv. Antiqua (strain Antiqua).